The following is a 692-amino-acid chain: Elongation factor G (692 aa).

The region spanning Asp8–Leu283 is the tr-type G domain. GTP-binding positions include Ala17 to Thr24, Asp81 to His85, and Asn135 to Asp138.

It belongs to the TRAFAC class translation factor GTPase superfamily. Classic translation factor GTPase family. EF-G/EF-2 subfamily.

It is found in the cytoplasm. Functionally, catalyzes the GTP-dependent ribosomal translocation step during translation elongation. During this step, the ribosome changes from the pre-translocational (PRE) to the post-translocational (POST) state as the newly formed A-site-bound peptidyl-tRNA and P-site-bound deacylated tRNA move to the P and E sites, respectively. Catalyzes the coordinated movement of the two tRNA molecules, the mRNA and conformational changes in the ribosome. In Trichlorobacter lovleyi (strain ATCC BAA-1151 / DSM 17278 / SZ) (Geobacter lovleyi), this protein is Elongation factor G.